A 406-amino-acid polypeptide reads, in one-letter code: Glutamyl-tRNA(Gln) amidotransferase subunit D (406 aa).

The 323-residue stretch at 68–390 folds into the Asparaginase/glutaminase domain; that stretch reads KSISILATGG…EEFINVFNRN (323 aa). Active-site residues include Thr-78, Thr-152, Asp-153, and Lys-230.

This sequence belongs to the asparaginase 1 family. GatD subfamily. Heterodimer of GatD and GatE.

It catalyses the reaction L-glutamyl-tRNA(Gln) + L-glutamine + ATP + H2O = L-glutaminyl-tRNA(Gln) + L-glutamate + ADP + phosphate + H(+). Allows the formation of correctly charged Gln-tRNA(Gln) through the transamidation of misacylated Glu-tRNA(Gln) in organisms which lack glutaminyl-tRNA synthetase. The reaction takes place in the presence of glutamine and ATP through an activated gamma-phospho-Glu-tRNA(Gln). The GatDE system is specific for glutamate and does not act on aspartate. The protein is Glutamyl-tRNA(Gln) amidotransferase subunit D of Thermoplasma volcanium (strain ATCC 51530 / DSM 4299 / JCM 9571 / NBRC 15438 / GSS1).